The following is a 224-amino-acid chain: UPF0758 protein LCA_0852 (224 aa).

The region spanning 100–222 is the MPN domain; sequence VVASSQMVGQ…YLSLREEGYL (123 aa). Zn(2+)-binding residues include histidine 171, histidine 173, and aspartate 184. A JAMM motif motif is present at residues 171-184; that stretch reads HNHPSGQLAPSTQD.

The protein belongs to the UPF0758 family.

In Latilactobacillus sakei subsp. sakei (strain 23K) (Lactobacillus sakei subsp. sakei), this protein is UPF0758 protein LCA_0852.